The sequence spans 307 residues: Fructokinase (307 aa).

It belongs to the carbohydrate kinase PfkB family.

The enzyme catalyses D-fructose + ATP = D-fructose 6-phosphate + ADP + H(+). In terms of biological role, involved in sucrose metabolism. This is Fructokinase (scrK) from Klebsiella pneumoniae.